Reading from the N-terminus, the 836-residue chain is MEGAGGENEKKKMSSERRKEKSRDAARSRRSKESEVFYELAHQLPLPHNVSSHLDKASVMRLTISYLRVRKLLDAGGLDSEDEMKAQMDCFYLKALDGFVMVLTDDGDMVYISDNVNKYMGLTQFELTGHSVFDFTHPCDHEEMREMLTHRNGPVRKGKELNTQRSFFLRMKCTLTSRGRTMNIKSATWKVLHCTGHIHVYDTNSNQPQCGYKKPPMTCLVLICEPIPHPSNIEIPLDSKTFLSRHSLDMKFSYCDERITELMGYEPEELLGRSIYEYYHALDSDHLTKTHHDMFTKGQVTTGQYRMLAKRGGYVWVETQATVIYNTKNSQPQCIVCVNYVVSGIIQHDLIFSLQQTESVLKPVESSDMKMTQLFTKVESEDTSCLFDKLKKEPDALTLLAPAAGDTIISLDFGSDDTETEDQQLEDVPLYNDVMFPSSNEKLNINLAMSPLPSSETPKPLRSSADPALNQEVALKLESSPESLGLSFTMPQIQDQPASPSDGSTRQSSPERLLQENVNTPNFSQPNSPSEYCFDVDSDMVNVFKLELVEKLFAEDTEAKNPFSTQDTDLDLEMLAPYIPMDDDFQLRSFDQLSPLESNSPSPPSMSTVTGFQQTQLQKPTITATATTTATTDESKTETKDNKEDIKILIASPSSTQVPQETTTAKASAYSGTHSRTASPDRAGKRVIEQTDKAHPRSLNLSATLNQRNTVPEEELNPKTIASQNAQRKRKMEHDGSLFQAAGIGTLLQQPGDCAPTMSLSWKRVKGFISSEQNGTEQKTIILIPSDLACRLLGQSMDESGLPQLTSYDCEVNAPIQGSRNLLQGEELLRALDQVN.

The tract at residues methionine 1–arginine 30 is disordered. Residues methionine 1–alanine 401 are interaction with TSGA10. Residues glutamate 7 to arginine 30 are compositionally biased toward basic and acidic residues. In terms of domain architecture, bHLH spans arginine 17–arginine 70. Positions lysine 21–arginine 30 are DNA-binding. A PAS 1 domain is found at serine 80–valine 155. The required for heterodimer formation with ARNT stretch occupies residues arginine 170–valine 191. In terms of domain architecture, PAS 2 spans proline 228–glycine 298. Phosphoserine; by CK1 is present on serine 247. One can recognise a PAC domain in the interval threonine 302–isoleucine 345. The interval serine 380–aspartate 417 is N-terminal VHL recognition site. Lysine 391 is covalently cross-linked (Glycyl lysine isopeptide (Lys-Gly) (interchain with G-Cter in SUMO)). The segment at alanine 401–glutamine 613 is ODD. Proline 402 carries the post-translational modification 4-hydroxyproline. Lysine 476 participates in a covalent cross-link: Glycyl lysine isopeptide (Lys-Gly) (interchain with G-Cter in SUMO). The disordered stretch occupies residues glutamine 492 to glutamate 511. The segment at phenylalanine 544–arginine 588 is NTAD. Lysine 545 carries the N6-acetyllysine; alternate modification. Residues lysine 545, lysine 551, and lysine 560 each participate in a glycyl lysine isopeptide (Lys-Gly) (interchain with G-Cter in ubiquitin) cross-link. Lysine 545 participates in a covalent cross-link: Glycyl lysine isopeptide (Lys-Gly) (interchain with G-Cter in ubiquitin); alternate. At serine 564 the chain carries Phosphoserine; by GSK3-beta. Phosphothreonine; by GSK3-beta is present on threonine 568. Residues aspartate 569–phenylalanine 585 are C-terminal VHL recognition site. Position 577 is a 4-hydroxyproline (proline 577). Phosphoserine; by PLK3 is present on serine 589. The ID stretch occupies residues serine 589–glutamine 795. Disordered regions lie at residues leucine 593–glycine 684 and glutamine 707–histidine 734. Residue serine 602 is modified to Phosphoserine; by GSK3-beta. Residues threonine 608–proline 620 show a composition bias toward polar residues. A compositionally biased stretch (low complexity) spans threonine 621–threonine 632. Positions aspartate 633–lysine 647 are enriched in basic and acidic residues. Positions serine 652–alanine 678 are enriched in polar residues. Serine 668 is modified (phosphoserine; by PLK3). N6-acetyllysine is present on lysine 719. The short motif at arginine 728 to lysine 731 is the Nuclear localization signal element. A CTAD region spans residues serine 796 to asparagine 836. Cysteine 810 carries the post-translational modification S-nitrosocysteine. Asparagine 813 is modified ((3S)-3-hydroxyasparagine).

Interacts with the ARNT; forms a heterodimer that binds core DNA sequence 5'-TACGTG-3' within the hypoxia response element (HRE) of target gene promoters. Interacts with COPS5; the interaction increases the transcriptional activity of HIF1A through increased stability. Interacts with EP300 (via TAZ-type 1 domains); the interaction is stimulated in response to hypoxia and inhibited by CITED2. Interacts with CREBBP (via TAZ-type 1 domains). Interacts with NCOA1, NCOA2, APEX1 and HSP90. Interacts (hydroxylated within the ODD domain) with VHLL (via beta domain); the interaction, leads to polyubiquitination and subsequent HIF1A proteasomal degradation. During hypoxia, sumoylated HIF1A also binds VHL; the interaction promotes the ubiquitination of HIF1A. Interacts with SENP1; the interaction desumoylates HIF1A resulting in stabilization and activation of transcription. Interacts (via the ODD domain) with NAA10; the interaction appears not to acetylate HIF1A nor have any affect on protein stability, during hypoxia. Interacts with RWDD3; the interaction enhances HIF1A sumoylation. Interacts with TSGA10. Interacts with HIF3A. Interacts with RORA (via the DNA binding domain); the interaction enhances HIF1A transcription under hypoxia through increasing protein stability. Interaction with PSMA7 inhibits the transactivation activity of HIF1A under both normoxic and hypoxia-mimicking conditions. Interacts with USP20. Interacts with RACK1; promotes HIF1A ubiquitination and proteasome-mediated degradation. Interacts (via N-terminus) with USP19. Interacts with SIRT2. Interacts (deacetylated form) with EGLN1. Interacts with CBFA2T3. Interacts with HSP90AA1 and HSP90AB1. Interacts with DCUN1D1; this interaction increases the interaction between VHL and DCUN1D1. Interacts with HIF1AN. In terms of processing, S-nitrosylation of Cys-810 may be responsible for increased recruitment of p300 coactivator necessary for transcriptional activity of HIF-1 complex. Requires phosphorylation for DNA-binding. Phosphorylation at Ser-247 by CSNK1D/CK1 represses kinase activity and impairs ARNT binding. Phosphorylation by GSK3-beta and PLK3 promote degradation by the proteasome. Post-translationally, sumoylated; with SUMO1 under hypoxia. Sumoylation is enhanced through interaction with RWDD3. Both sumoylation and desumoylation seem to be involved in the regulation of its stability during hypoxia. Sumoylation can promote either its stabilization or its VHL-dependent degradation by promoting hydroxyproline-independent HIF1A-VHL complex binding, thus leading to HIF1A ubiquitination and proteasomal degradation. Desumoylation by SENP1 increases its stability amd transcriptional activity. There is a disaccord between various publications on the effect of sumoylation and desumoylation on its stability and transcriptional activity. In terms of processing, acetylation of Lys-545 by ARD1 increases interaction with VHL and stimulates subsequent proteasomal degradation. Deacetylation of Lys-719 by SIRT2 increases its interaction with and hydroxylation by EGLN1 thereby inactivating HIF1A activity by inducing its proteasomal degradation. Ubiquitinated; in normoxia, following hydroxylation and interaction with VHL. Lys-545 appears to be the principal site of ubiquitination. Clioquinol, the Cu/Zn-chelator, inhibits ubiquitination through preventing hydroxylation at Asn-813. Ubiquitinated by E3 ligase VHL. Deubiquitinated by UCHL1. Post-translationally, the iron and 2-oxoglutarate dependent 3-hydroxylation of asparagine is (S) stereospecific within HIF CTAD domains. In terms of processing, in normoxia, is hydroxylated on Pro-402 and Pro-577 in the oxygen-dependent degradation domain (ODD) by EGLN1/PHD2 and EGLN2/PHD1. EGLN3/PHD3 has also been shown to hydroxylate Pro-577. The hydroxylated prolines promote interaction with VHL, initiating rapid ubiquitination and subsequent proteasomal degradation. Deubiquitinated by USP20. Under hypoxia, proline hydroxylation is impaired and ubiquitination is attenuated, resulting in stabilization. In normoxia, is hydroxylated on Asn-813 by HIF1AN, thus abrogating interaction with CREBBP and EP300 and preventing transcriptional activation. Repressed by iron ion, via Fe(2+) prolyl hydroxylase (PHD) enzymes-mediated hydroxylation and subsequent proteasomal degradation. Ubiquitous.

It is found in the cytoplasm. The protein resides in the nucleus. The protein localises to the nucleus speckle. Its activity is regulated as follows. Induced by reactive oxygen species (ROS). In terms of biological role, functions as a master transcriptional regulator of the adaptive response to hypoxia. Under hypoxic conditions, activates the transcription of over 40 genes, including erythropoietin, glucose transporters, glycolytic enzymes, vascular endothelial growth factor, HILPDA, and other genes whose protein products increase oxygen delivery or facilitate metabolic adaptation to hypoxia. Plays an essential role in embryonic vascularization, tumor angiogenesis and pathophysiology of ischemic disease. Heterodimerizes with ARNT; heterodimer binds to core DNA sequence 5'-TACGTG-3' within the hypoxia response element (HRE) of target gene promoters. Activation requires recruitment of transcriptional coactivators such as CREBBP and EP300. Activity is enhanced by interaction with NCOA1 and/or NCOA2. Interaction with redox regulatory protein APEX1 seems to activate CTAD and potentiates activation by NCOA1 and CREBBP. Involved in the axonal distribution and transport of mitochondria in neurons during hypoxia. This chain is Hypoxia-inducible factor 1-alpha (Hif1a), found in Mus musculus (Mouse).